Reading from the N-terminus, the 271-residue chain is L-aspartate dehydrogenase (271 aa).

Residues alanine 124 and asparagine 192 each coordinate NAD(+). Histidine 222 is an active-site residue.

The protein belongs to the L-aspartate dehydrogenase family.

It carries out the reaction L-aspartate + NADP(+) + H2O = oxaloacetate + NH4(+) + NADPH + H(+). The catalysed reaction is L-aspartate + NAD(+) + H2O = oxaloacetate + NH4(+) + NADH + H(+). The protein operates within cofactor biosynthesis; NAD(+) biosynthesis; iminoaspartate from L-aspartate (dehydrogenase route): step 1/1. Functionally, specifically catalyzes the NAD or NADP-dependent dehydrogenation of L-aspartate to iminoaspartate. This chain is L-aspartate dehydrogenase, found in Methanosarcina barkeri (strain Fusaro / DSM 804).